The chain runs to 312 residues: Olfactory receptor 1D5 (312 aa).

Topologically, residues 1–25 (MDGDNQSENSQFLLLGISESPEQQR) are extracellular. N5 carries N-linked (GlcNAc...) asparagine glycosylation. A helical membrane pass occupies residues 26-49 (ILFWMFLSMYLVTVLGNVLIILAI). The Cytoplasmic segment spans residues 50 to 57 (SSDSHLHT). Residues 58–79 (PMYFFLANLSFTDLFFVTNTIP) traverse the membrane as a helical segment. Residues 80 to 100 (KMLVNFQSQNKAISYAGCLTQ) lie on the Extracellular side of the membrane. An intrachain disulfide couples C97 to C189. The helical transmembrane segment at 101–120 (LYFLVSLVTLDNLILAVMAY) threads the bilayer. Residues 121–140 (DRYVATCCPLHYVTAMSPGL) lie on the Cytoplasmic side of the membrane. The chain crosses the membrane as a helical span at residues 141–158 (CVLLLSLCWGLSVLYGLL). The Extracellular segment spans residues 159-196 (LTFLLTRVTFCGPREIHYLFCDMYILLWLACSNTHIIH). The helical transmembrane segment at 197–220 (TALIATGCFIFLTPLGFMTTSYVR) threads the bilayer. Topologically, residues 221–237 (IVRTILQMPSASKKYKT) are cytoplasmic. A helical transmembrane segment spans residues 238–260 (FSTCASHLGVVSLFYGTLAMVYL). Residues 261–271 (QPLHTYSMKDS) lie on the Extracellular side of the membrane. A helical transmembrane segment spans residues 272–291 (VATVMYAVLTPMMNPFIYRL). Residues 292 to 312 (RNKDMHGAPGRVLWRPFQRPK) are Cytoplasmic-facing.

It belongs to the G-protein coupled receptor 1 family.

It is found in the cell membrane. Its function is as follows. Odorant receptor. This chain is Olfactory receptor 1D5 (OR1D5), found in Homo sapiens (Human).